Here is a 586-residue protein sequence, read N- to C-terminus: Proteasome-associated ATPase (586 aa).

A coiled-coil region spans residues 11–76; the sequence is AWRELEAVRA…LREEVDRLGQ (66 aa). An ATP-binding site is contributed by 273-278; sequence GCGKTL. The segment at 585 to 586 is docks into pockets in the proteasome alpha-ring; it reads YL.

Belongs to the AAA ATPase family. Homohexamer. Assembles into a hexameric ring structure that caps the 20S proteasome core. Strongly interacts with the prokaryotic ubiquitin-like protein Pup through a hydrophobic interface; the interacting region of ARC lies in its N-terminal coiled-coil domain. There is one Pup binding site per ARC hexamer ring. Upon ATP-binding, the C-terminus of ARC interacts with the alpha-rings of the proteasome core, possibly by binding to the intersubunit pockets.

It functions in the pathway protein degradation; proteasomal Pup-dependent pathway. ATPase which is responsible for recognizing, binding, unfolding and translocation of pupylated proteins into the bacterial 20S proteasome core particle. May be essential for opening the gate of the 20S proteasome via an interaction with its C-terminus, thereby allowing substrate entry and access to the site of proteolysis. Thus, the C-termini of the proteasomal ATPase may function like a 'key in a lock' to induce gate opening and therefore regulate proteolysis. This is Proteasome-associated ATPase from Nocardia farcinica (strain IFM 10152).